Consider the following 343-residue polypeptide: Thioredoxin domain-containing protein 15 (343 aa).

Residues 1-20 (MQLLCWWQILLWVLGLPARG) form the signal peptide. The Extracellular portion of the chain corresponds to 21–304 (LEEDSGHTWQ…GPLPSTLVKT (284 aa)). Basic and acidic residues predominate over residues 86-95 (EDQRSTEAHD). A disordered region spans residues 86-112 (EDQRSTEAHDGTCSAQGDEDPRCGGRE). Residues 162-279 (ERNVTGLENF…LKIFIFNQTG (118 aa)) form the Thioredoxin domain. Residues asparagine 170, asparagine 177, asparagine 189, and asparagine 276 are each glycosylated (N-linked (GlcNAc...) asparagine). The helical transmembrane segment at 305–325 (VDWLLVFSLFFLISFIMYATI) threads the bilayer. Over 326–343 (RTESIRWLIPGQEQEHAE) the chain is Cytoplasmic.

It is found in the cell projection. The protein resides in the cilium membrane. Functionally, acts as a positive regulator of ciliary hedgehog signaling. Required for cilia biogenesis. In Rattus norvegicus (Rat), this protein is Thioredoxin domain-containing protein 15 (Txndc15).